We begin with the raw amino-acid sequence, 396 residues long: Phosphoglycerate kinase (396 aa).

Residues 21 to 23, Arg-36, 59 to 62, Arg-118, and Arg-151 each bind substrate; these read DFN and HFDR. ATP-binding positions include Lys-201, Glu-323, and 353 to 356; that span reads GGDT.

This sequence belongs to the phosphoglycerate kinase family. Monomer.

The protein localises to the cytoplasm. The catalysed reaction is (2R)-3-phosphoglycerate + ATP = (2R)-3-phospho-glyceroyl phosphate + ADP. Its pathway is carbohydrate degradation; glycolysis; pyruvate from D-glyceraldehyde 3-phosphate: step 2/5. This Caulobacter sp. (strain K31) protein is Phosphoglycerate kinase.